The chain runs to 326 residues: Tryptophan--tRNA ligase (326 aa).

ATP is bound by residues 11-13 (QPT) and 19-20 (GN). A 'HIGH' region motif is present at residues 12–20 (PTGQIHLGN). D135 is an L-tryptophan binding site. ATP-binding positions include 147-149 (GED), V186, and 195-199 (KMSKS). The 'KMSKS' region signature appears at 195-199 (KMSKS).

The protein belongs to the class-I aminoacyl-tRNA synthetase family. Homodimer.

It localises to the cytoplasm. It carries out the reaction tRNA(Trp) + L-tryptophan + ATP = L-tryptophyl-tRNA(Trp) + AMP + diphosphate + H(+). Its function is as follows. Catalyzes the attachment of tryptophan to tRNA(Trp). The protein is Tryptophan--tRNA ligase of Helicobacter pylori (strain J99 / ATCC 700824) (Campylobacter pylori J99).